A 1901-amino-acid polypeptide reads, in one-letter code: Protein TIC 214 (1901 aa).

6 helical membrane-spanning segments follow: residues 18–38, 64–84, 87–107, 124–144, 172–192, and 221–241; these read IINS…FSIG, FITG…HLAL, PHTI…WNNH, LSIQ…HFIL, VGWL…LVWI, and IFSI…PSPI. Disordered regions lie at residues 248 to 299, 797 to 817, and 1591 to 1618; these read EASK…EERW, REEQ…ENKR, and IQEA…LGPV. Residues 256–268 are compositionally biased toward acidic residues; it reads VESEEERDVEIET. The segment covering 1591–1611 has biased composition (basic and acidic residues); that stretch reads IQEAKEPASQGEKERGSDIEN.

This sequence belongs to the TIC214 family. Part of the Tic complex.

The protein localises to the plastid. The protein resides in the chloroplast inner membrane. Involved in protein precursor import into chloroplasts. May be part of an intermediate translocation complex acting as a protein-conducting channel at the inner envelope. The protein is Protein TIC 214 of Nicotiana sylvestris (Wood tobacco).